A 137-amino-acid polypeptide reads, in one-letter code: 5-hydroxytryptamine receptor 4 (137 aa).

A helical membrane pass occupies residues 12 to 35 (TPLRVAVLLAGCWAIPVLISFLPI). N-linked (GlcNAc...) asparagine glycosylation occurs at asparagine 58. A helical membrane pass occupies residues 67–90 (NKPYAITCSVVAFYIPFLLMVLAY). Positions 112–137 (APAEGRPPSADQHSTHRMRTETKAAK) are disordered.

It belongs to the G-protein coupled receptor 1 family. Interacts (via C-terminus 330-346 AA) with GRK5; this interaction is promoted by 5-HT (serotonin).

It localises to the cell membrane. The protein localises to the endosome membrane. G-protein coupled receptor for 5-hydroxytryptamine (serotonin), a biogenic hormone that functions as a neurotransmitter, a hormone and a mitogen. Ligand binding causes a conformation change that triggers signaling via guanine nucleotide-binding proteins (G proteins) and modulates the activity of downstream effectors. HTR4 is coupled to G(s) G alpha proteins and mediates activation of adenylate cyclase activity. The protein is 5-hydroxytryptamine receptor 4 (HTR4) of Sus scrofa (Pig).